The chain runs to 638 residues: Phenylethylamine oxidase (638 aa).

Residues 1-2 (MT) constitute a propeptide that is removed on maturation. 296-307 (YFDTGEYLVGQY) lines the substrate pocket. The active-site Proton acceptor is the aspartate 298. Cysteines 317 and 343 form a disulfide. 379–384 (IGNYDY) provides a ligand contact to substrate. Tyrosine 382 functions as the Schiff-base intermediate with substrate; via topaquinone in the catalytic mechanism. At tyrosine 382 the chain carries 2',4',5'-topaquinone. Residues histidine 431, histidine 433, and histidine 592 each contribute to the Cu cation site.

Belongs to the copper/topaquinone oxidase family. In terms of assembly, homodimer. The cofactor is Cu cation. L-topaquinone is required as a cofactor. Topaquinone (TPQ) is generated by copper-dependent autoxidation of a specific tyrosyl residue.

It catalyses the reaction a primary methyl amine + O2 + H2O = an aldehyde + H2O2 + NH4(+). The catalysed reaction is 2-phenylethylamine + O2 + H2O = 2-phenylacetaldehyde + H2O2 + NH4(+). Catalyzes the oxidative deamination of phenylethylamine to phenylacetaldehyde with the concomitant production of hydrogen peroxide and ammonia. This is Phenylethylamine oxidase from Arthrobacter globiformis.